The sequence spans 261 residues: Glutamate racemase (261 aa).

Substrate-binding positions include 9–10 (DS) and 41–42 (YG). Cys73 (proton donor/acceptor) is an active-site residue. A substrate-binding site is contributed by 74 to 75 (NT). Cys179 acts as the Proton donor/acceptor in catalysis. 180 to 181 (TH) serves as a coordination point for substrate.

It belongs to the aspartate/glutamate racemases family.

It catalyses the reaction L-glutamate = D-glutamate. Its pathway is cell wall biogenesis; peptidoglycan biosynthesis. Functionally, provides the (R)-glutamate required for cell wall biosynthesis. The sequence is that of Glutamate racemase from Aliivibrio fischeri (strain MJ11) (Vibrio fischeri).